The following is a 230-amino-acid chain: A-type ATP synthase subunit D (230 aa).

Positions 204-230 are disordered; sequence AKKEEEEDALAAEEEAEEEPEAVTADD. The segment covering 208-230 has biased composition (acidic residues); sequence EEEDALAAEEEAEEEPEAVTADD.

Belongs to the V-ATPase D subunit family. As to quaternary structure, has multiple subunits with at least A(3), B(3), C, D, E, F, H, I and proteolipid K(x).

Its subcellular location is the cell membrane. Functionally, component of the A-type ATP synthase that produces ATP from ADP in the presence of a proton gradient across the membrane. The protein is A-type ATP synthase subunit D of Haloarcula marismortui (strain ATCC 43049 / DSM 3752 / JCM 8966 / VKM B-1809) (Halobacterium marismortui).